The primary structure comprises 427 residues: Interferon regulatory factor 3 (427 aa).

Thr-3 carries the post-translational modification Phosphothreonine. Residues 5 to 111 constitute a DNA-binding region (IRF tryptophan pentad repeat); it reads KPRILPWLVS…DPHKIYEFVN (107 aa). Ser-14 carries the phosphoserine modification. Phosphothreonine is present on Thr-75. Residues 91-107 are compositionally biased toward basic and acidic residues; the sequence is RLAEDRSKDPHDPHKIY. The interval 91 to 136 is disordered; the sequence is RLAEDRSKDPHDPHKIYEFVNSGVGDFSQPDTSPDTNGGGSTSDTQ. Phosphoserine occurs at positions 97 and 123. Residues 139 to 149 carry the Nuclear export signal motif; it reads ILDELLGNMVL. Residues 141 to 427 form a mediates interaction with ZDHHC11 region; sequence DELLGNMVLA…GMDFQGPGES (287 aa). At Ser-175 the chain carries (Microbial infection) Phosphoserine. Thr-180 carries the post-translational modification Phosphothreonine. A Phosphoserine modification is found at Ser-188. A Glycyl lysine isopeptide (Lys-Gly) (interchain with G-Cter in ISG15) cross-link involves residue Lys-193. The interval 200-360 is interaction with HERC5; sequence EEWEFEVTAF…SWPQDQPWTK (161 aa). Thr-237, Thr-244, and Thr-253 each carry phosphothreonine. Cys-267 and Cys-289 are oxidised to a cystine. Glycyl lysine isopeptide (Lys-Gly) (interchain with G-Cter in ISG15) cross-links involve residues Lys-360 and Lys-366. At Lys-366 the chain carries N6-acetyllysine. Position 385 is a phosphoserine (Ser-385). Ser-386 is modified (diphosphoserine). A Phosphoserine; by TBK1 modification is found at Ser-386. The residue at position 396 (Ser-396) is a Phosphoserine; by IKKE and TBK1. Position 398 is a phosphoserine (Ser-398). Position 404 is a phosphothreonine (Thr-404). A Phosphoserine modification is found at Ser-427.

Belongs to the IRF family. In terms of assembly, monomer. Homodimer; phosphorylation-induced. Interacts (when phosphorylated) with CREBBP. Interacts with MAVS (via phosphorylated pLxIS motif). Interacts with TICAM1 (via phosphorylated pLxIS motif). Interacts with STING1 (via phosphorylated pLxIS motif). Interacts with IKBKE and TBK1. Interacts with TICAM2. Interacts with RBCK1. Interacts with HERC5. Interacts with DDX3X (phosphorylated at 'Ser-102'); the interaction allows the phosphorylation and activation of IRF3 by IKBKE. Interacts with TRIM21 and ULK1, in the presence of TRIM21; this interaction leads to IRF3 degradation by autophagy. Interacts with RIOK3; RIOK3 probably mediates the interaction of TBK1 with IRF3. Interacts with ILRUN; the interaction inhibits IRF3 binding to its DNA consensus sequence. Interacts with LYAR; this interaction impairs IRF3 DNA-binding activity. Interacts with TRAF3. Interacts with ZDHHC11; ZDHHC11 recruits IRF3 to STING1 upon DNA virus infection and thereby promotes IRF3 activation. Interacts with HSP90AA1; the interaction mediates IRF3 association with TOMM70. Interacts with BCL2; the interaction decreases upon Sendai virus infection. Interacts with BAX; the interaction is direct, increases upon Sendai virus infection and mediates the formation of the apoptosis complex TOMM70:HSP90AA1:IRF3:BAX. Interacts with DDX56. Interacts with NBR1. (Microbial infection) Interacts with rotavirus A NSP1 (via pLxIS motif); this interaction leads to the proteasome-dependent degradation of IRF3. As to quaternary structure, (Microbial infection) Interacts with herpes virus 8/HHV-8 protein VIRF1. In terms of assembly, (Microbial infection) Interacts with Seneca Valley virus protease 3C; this interaction is involved in the suppression of IRF3 expression and phosphorylation by the virus. (Microbial infection) Interacts with herpes virus 2/HHV-2 protein ICP27; this interaction inhibits IRF3 phosphorylation and nuclear translocation. As to quaternary structure, (Microbial infection) Interacts with human cytomegalovirus protein UL44; this interaction prevents IRF3 binding to its promoters. In terms of assembly, (Microbial infection) Interacts with the two fragments of MERS-COV protein N produced by CASP6 through proteolytic cleavage; both interactions inhibit IRF3 nuclear translocation after activation and IFN signaling. Post-translationally, constitutively phosphorylated on many Ser/Thr residues. Activated following phosphorylation by TBK1 and IKBKE. Innate adapter proteins, such as MAVS, STING1 or TICAM1, are first activated by viral RNA, cytosolic DNA, and bacterial lipopolysaccharide (LPS), respectively, leading to activation of the kinases TBK1 and IKBKE. These kinases then phosphorylate the adapter proteins on the pLxIS motif, leading to recruitment of IRF3, thereby licensing IRF3 for phosphorylation by TBK1. Phosphorylation at Ser-386 is followed by pyrophosphorylation at the same residue, promoting phosphorylation at Ser-396. Phosphorylated IRF3 dissociates from the adapter proteins, dimerizes, and then enters the nucleus to induce IFNs. In terms of processing, pyrophosphorylated by UAP1 following phosphorylation at Ser-386 by TBK1. Pyrophosphorylation promotes subsequent phosphorylation at Ser-396, leading to homodimerization of IRF3. Acetylation at Lys-366 by KAT8 inhibits recruimtent to promoters and transcription factor activity. Acetylation by KAT8 is promoted by phosphorylation at Ser-396. Post-translationally, ubiquitinated; ubiquitination involves RBCK1 leading to proteasomal degradation. Polyubiquitinated; ubiquitination involves TRIM21 leading to proteasomal degradation. Ubiquitinated by UBE3C, leading to its degradation. Deubiquitinated by USP5 on both 'Lys-48'-linked unanchored and 'Lys-63'-linked anchored polyubiquitin, leading to inhibition of anti-RNA viral innate immunity. In terms of processing, ISGylated by HERC5 resulting in sustained IRF3 activation and in the inhibition of IRF3 ubiquitination by disrupting PIN1 binding. The phosphorylation state of IRF3 does not alter ISGylation. Proteolytically cleaved by apoptotic caspases during apoptosis, leading to its inactivation. Cleavage by CASP3 during virus-induced apoptosis inactivates it, preventing cytokine overproduction. Post-translationally, (Microbial infection) ISGylated. ISGylation is cleaved and removed by SARS-COV-2 nsp3 which attenuates type I interferon responses. In terms of processing, (Microbial infection) Phosphorylation and subsequent activation of IRF3 is inhibited by vaccinia virus protein E3. (Microbial infection) Phosphorylated by herpes simplex virus 1/HHV-1 US3 at Ser-175 to prevent IRF3 activation. As to expression, expressed constitutively in a variety of tissues.

The protein localises to the cytoplasm. It localises to the nucleus. It is found in the mitochondrion. In the absence of viral infection, maintained as a monomer in an autoinhibited state. Phosphorylation by TBK1 and IKBKE disrupts this autoinhibition leading to the liberation of the DNA-binding and dimerization activities and its nuclear localization where it can activate type I IFN and ISG genes. Phosphorylation and activation follow the following steps: innate adapter proteins, such as MAVS, STING1 or TICAM1, are first activated by viral RNA, cytosolic DNA and bacterial lipopolysaccharide (LPS), respectively, leading to activation of the kinases TBK1 and IKBKE. These kinases then phosphorylate the adapter proteins on their pLxIS motif, leading to recruitment of IRF3, thereby licensing IRF3 for phosphorylation by TBK1. Phosphorylated IRF3 dissociates from the adapter proteins, dimerizes, and then enters the nucleus to induce IFNs. Its activity is regulated as follows. (Microbial infection) Activated upon coronavirus SARS-CoV-2 infection. Functionally, key transcriptional regulator of type I interferon (IFN)-dependent immune responses which plays a critical role in the innate immune response against DNA and RNA viruses. Regulates the transcription of type I IFN genes (IFN-alpha and IFN-beta) and IFN-stimulated genes (ISG) by binding to an interferon-stimulated response element (ISRE) in their promoters. Acts as a more potent activator of the IFN-beta (IFNB) gene than the IFN-alpha (IFNA) gene and plays a critical role in both the early and late phases of the IFNA/B gene induction. Found in an inactive form in the cytoplasm of uninfected cells and following viral infection, double-stranded RNA (dsRNA), or toll-like receptor (TLR) signaling, is phosphorylated by IKBKE and TBK1 kinases. This induces a conformational change, leading to its dimerization and nuclear localization and association with CREB binding protein (CREBBP) to form dsRNA-activated factor 1 (DRAF1), a complex which activates the transcription of the type I IFN and ISG genes. Can activate distinct gene expression programs in macrophages and can induce significant apoptosis in primary macrophages. In response to Sendai virus infection, is recruited by TOMM70:HSP90AA1 to mitochondrion and forms an apoptosis complex TOMM70:HSP90AA1:IRF3:BAX inducing apoptosis. Key transcription factor regulating the IFN response during SARS-CoV-2 infection. This chain is Interferon regulatory factor 3, found in Homo sapiens (Human).